The chain runs to 483 residues: tRNA sulfurtransferase (483 aa).

In terms of domain architecture, THUMP spans 61–165; it reads AEVLEILTTT…DELLNQVIAR (105 aa). Residues 183 to 184, lysine 265, glycine 287, and glutamine 296 each bind ATP; that span reads LI. Residues cysteine 344 and cysteine 457 are joined by a disulfide bond. In terms of domain architecture, Rhodanese spans 405–483; sequence EEGNAVVLDI…GFNNVKVYRP (79 aa). Cysteine 457 (cysteine persulfide intermediate) is an active-site residue.

Belongs to the ThiI family.

It is found in the cytoplasm. It carries out the reaction [ThiI sulfur-carrier protein]-S-sulfanyl-L-cysteine + a uridine in tRNA + 2 reduced [2Fe-2S]-[ferredoxin] + ATP + H(+) = [ThiI sulfur-carrier protein]-L-cysteine + a 4-thiouridine in tRNA + 2 oxidized [2Fe-2S]-[ferredoxin] + AMP + diphosphate. The catalysed reaction is [ThiS sulfur-carrier protein]-C-terminal Gly-Gly-AMP + S-sulfanyl-L-cysteinyl-[cysteine desulfurase] + AH2 = [ThiS sulfur-carrier protein]-C-terminal-Gly-aminoethanethioate + L-cysteinyl-[cysteine desulfurase] + A + AMP + 2 H(+). The protein operates within cofactor biosynthesis; thiamine diphosphate biosynthesis. Its function is as follows. Catalyzes the ATP-dependent transfer of a sulfur to tRNA to produce 4-thiouridine in position 8 of tRNAs, which functions as a near-UV photosensor. Also catalyzes the transfer of sulfur to the sulfur carrier protein ThiS, forming ThiS-thiocarboxylate. This is a step in the synthesis of thiazole, in the thiamine biosynthesis pathway. The sulfur is donated as persulfide by IscS. The protein is tRNA sulfurtransferase of Vibrio cholerae serotype O1 (strain ATCC 39315 / El Tor Inaba N16961).